The sequence spans 186 residues: Peptidyl-tRNA hydrolase (186 aa).

Residue Y16 participates in tRNA binding. The active-site Proton acceptor is H21. Residues Y60 and N62 each coordinate tRNA.

This sequence belongs to the PTH family. As to quaternary structure, monomer.

The protein resides in the cytoplasm. It carries out the reaction an N-acyl-L-alpha-aminoacyl-tRNA + H2O = an N-acyl-L-amino acid + a tRNA + H(+). In terms of biological role, hydrolyzes ribosome-free peptidyl-tRNAs (with 1 or more amino acids incorporated), which drop off the ribosome during protein synthesis, or as a result of ribosome stalling. Functionally, catalyzes the release of premature peptidyl moieties from peptidyl-tRNA molecules trapped in stalled 50S ribosomal subunits, and thus maintains levels of free tRNAs and 50S ribosomes. The chain is Peptidyl-tRNA hydrolase from Tropheryma whipplei (strain Twist) (Whipple's bacillus).